Reading from the N-terminus, the 897-residue chain is Protein transport protein SEC24-1 (897 aa).

Zn(2+) contacts are provided by cysteine 213, cysteine 216, cysteine 235, and cysteine 238. Residues 213–238 (CRRCRSYINPFAKFIEQGRRWRCNFC) form a zinc finger-like region.

This sequence belongs to the SEC23/SEC24 family. SEC24 subfamily. The COPII coat is composed of at least 5 proteins: the SEC23/24 complex, the SEC13/31 complex, and the protein SAR1. Golgi apparatus membrane; Peripheral membrane protein; Cytoplasmic side.

It localises to the cytoplasm. The protein localises to the cytoplasmic vesicle. The protein resides in the COPII-coated vesicle membrane. Its subcellular location is the endoplasmic reticulum membrane. It is found in the golgi apparatus membrane. Its function is as follows. Component of the coat protein complex II (COPII) which promotes the formation of transport vesicles from the endoplasmic reticulum (ER). The coat has two main functions, the physical deformation of the endoplasmic reticulum membrane into vesicles and the selection of cargo molecules. In Candida glabrata (strain ATCC 2001 / BCRC 20586 / JCM 3761 / NBRC 0622 / NRRL Y-65 / CBS 138) (Yeast), this protein is Protein transport protein SEC24-1 (SEC241).